Here is a 160-residue protein sequence, read N- to C-terminus: Transcriptional repressor NrdR (160 aa).

The segment at 3-34 (CPACNYNGTKVLDSRPVQDFGSIRRRRECESC) is a zinc-finger region. The ATP-cone domain maps to 49-139 (LIIVKKDGTR…VYKQFKDINV (91 aa)).

Belongs to the NrdR family. It depends on Zn(2+) as a cofactor.

Negatively regulates transcription of bacterial ribonucleotide reductase nrd genes and operons by binding to NrdR-boxes. This is Transcriptional repressor NrdR from Exiguobacterium sibiricum (strain DSM 17290 / CCUG 55495 / CIP 109462 / JCM 13490 / 255-15).